The chain runs to 118 residues: UPF0342 protein LCK_01004 (118 aa).

The protein belongs to the UPF0342 family.

This Leuconostoc citreum (strain KM20) protein is UPF0342 protein LCK_01004.